Consider the following 166-residue polypeptide: Cyanate hydratase (166 aa).

Active-site residues include arginine 92, glutamate 95, and serine 118.

Belongs to the cyanase family.

The enzyme catalyses cyanate + hydrogencarbonate + 3 H(+) = NH4(+) + 2 CO2. Functionally, catalyzes the reaction of cyanate with bicarbonate to produce ammonia and carbon dioxide. The polypeptide is Cyanate hydratase (Sorghum bicolor (Sorghum)).